The primary structure comprises 180 residues: D-glycero-beta-D-manno-heptose-1,7-bisphosphate 7-phosphatase (180 aa).

The Nucleophile role is filled by D14. Positions 14 and 16 each coordinate Mg(2+). Substrate-binding positions include D14–D16, N22–Y25, and T56–S59. The active-site Proton donor is the D16. The Zn(2+) site is built by C95, H97, C110, and H112. R113–K114 serves as a coordination point for substrate. D139 contacts Mg(2+).

Belongs to the gmhB family. In terms of assembly, monomer. It depends on Mg(2+) as a cofactor.

The protein resides in the cytoplasm. The enzyme catalyses D-glycero-beta-D-manno-heptose 1,7-bisphosphate + H2O = D-glycero-beta-D-manno-heptose 1-phosphate + phosphate. The protein operates within nucleotide-sugar biosynthesis; ADP-L-glycero-beta-D-manno-heptose biosynthesis; ADP-L-glycero-beta-D-manno-heptose from D-glycero-beta-D-manno-heptose 7-phosphate: step 2/4. It participates in bacterial outer membrane biogenesis; LPS core biosynthesis. Converts the D-glycero-beta-D-manno-heptose 1,7-bisphosphate (beta-HBP) intermediate into D-glycero-beta-D-manno-heptose 1-phosphate by removing the phosphate group at the C-7 position. Also catalyzes the dephosphorylation of D-glycero-alpha-D-manno-heptose 1,7-bisphosphate in vitro. This is D-glycero-beta-D-manno-heptose-1,7-bisphosphate 7-phosphatase from Rhodopseudomonas palustris (strain ATCC BAA-98 / CGA009).